A 452-amino-acid polypeptide reads, in one-letter code: La-related protein 1B (452 aa).

Over residues 1-22 (MATTASSAANSASRFSIDSSIS) the composition is skewed to low complexity. Residues 1–251 (MATTASSAAN…GFSHRNYSGR (251 aa)) are disordered. Position 2 is an N-acetylalanine (Ala2). Residues 44 to 68 (LSLSQDDPFSAPSVSPPTGNNSSDY) show a composition bias toward polar residues. Composition is skewed to low complexity over residues 99–117 (SWPALSLSARSSSIKSPSL), 136–163 (ATSNTSTNANAGSSVSATSSENSAVNNS), 171–185 (NNNTSSSSTSSNVSN), and 206–223 (SGNFRNSQRNRNSSSYPR). The segment covering 225-236 (EGLHHGNRRNYE) has biased composition (basic and acidic residues). Residues 237 to 247 (HGNQSGFSHRN) show a composition bias toward polar residues. One can recognise an HTH La-type RNA-binding domain in the interval 328 to 417 (RNFDAILYNK…RGDWDKYLLP (90 aa)). Positions 419 to 452 (EPSRSGPAAGASNNASLVSQIESMTLSERSREGV) are disordered. Over residues 422–434 (RSGPAAGASNNAS) the composition is skewed to low complexity. The segment covering 435 to 445 (LVSQIESMTLS) has biased composition (polar residues).

It belongs to the LARP family.

The protein resides in the cytoplasm. In terms of biological role, promotes leaf senescence. The protein is La-related protein 1B (LARP1B) of Arabidopsis thaliana (Mouse-ear cress).